A 533-amino-acid polypeptide reads, in one-letter code: Di/tripeptide-binding protein 4 (533 aa).

The first 25 residues, Met-1–Ala-25, serve as a signal peptide directing secretion.

This sequence belongs to the bacterial solute-binding protein 5 family. As to quaternary structure, the complex is composed of two ATP-binding proteins (DppD and DppF), two transmembrane proteins (DppB and DppC) and a solute-binding protein (DppA4). Five orthologous SBPs (DppA1-A5) are present in P.aeruginosa, which increases the substrate specificity of the DppBCDF transporter.

Functionally, part of the ABC transporter DppABCDF involved in the uptake of various di/tripeptides. Prefers dipeptides with acidic residues at the C-terminal end. Efficiently uses tripeptides. In Pseudomonas aeruginosa (strain UCBPP-PA14), this protein is Di/tripeptide-binding protein 4.